Reading from the N-terminus, the 366-residue chain is Terpene cyclase atmA (366 aa).

8 helical membrane passes run phenylalanine 9–phenylalanine 29, leucine 84–isoleucine 104, glycine 113–isoleucine 133, glycine 162–alanine 182, isoleucine 195–phenylalanine 215, valine 233–valine 253, alanine 291–tryptophan 311, and isoleucine 333–isoleucine 353.

The protein belongs to the membrane-bound ascI terpene cyclase family.

It is found in the membrane. Aflatrem synthesis protein A; part of the ATM2 gene cluster that mediates the biosynthesis of aflatrem, a tremorgenic mycotoxin with acute neurotoxic effects. Synthesis of geranylgeranyl diphosphate (GGPP) by AtmG (a GGPP synthase) precedes condensation of GGPP with indole 3-glycerol phosphate, followed by epoxidation and cyclization by AtmM (a FAD-dependent monooxygenase) and AtmC (a prenyltransferase) to produce paspaline. AtmB is also essential for paspaline production, but its exact role has not been identified yet. AtmP, a cytochrome P450 monooxygenase, subsequently converts paspaline to 13-desoxypaxilline via PC-M6 by removal of the C-30 methyl group and oxidation at C-10. AtmQ, a cytochrome P450 monooxygenase, then catalyzes the oxidation of 13-desoxypaxilline, first at C-7 to produce paspalicine and then at C-13 to form paspalinine. Finally, AtmD prenylates paspalinine to form aflatrem. The role of atmA in the aflatrem biosynthesis is still unknown. This chain is Terpene cyclase atmA, found in Aspergillus flavus.